We begin with the raw amino-acid sequence, 101 residues long: Phosphoribosyl-AMP cyclohydrolase (101 aa).

Position 71 (D71) interacts with Mg(2+). Position 72 (C72) interacts with Zn(2+). Residues D73 and D75 each coordinate Mg(2+). Zn(2+) is bound by residues C88 and C95.

This sequence belongs to the PRA-CH family. As to quaternary structure, homodimer. The cofactor is Mg(2+). It depends on Zn(2+) as a cofactor.

Its subcellular location is the cytoplasm. The catalysed reaction is 1-(5-phospho-beta-D-ribosyl)-5'-AMP + H2O = 1-(5-phospho-beta-D-ribosyl)-5-[(5-phospho-beta-D-ribosylamino)methylideneamino]imidazole-4-carboxamide. It functions in the pathway amino-acid biosynthesis; L-histidine biosynthesis; L-histidine from 5-phospho-alpha-D-ribose 1-diphosphate: step 3/9. Its function is as follows. Catalyzes the hydrolysis of the adenine ring of phosphoribosyl-AMP. The protein is Phosphoribosyl-AMP cyclohydrolase of Bacillus cereus (strain G9842).